A 792-amino-acid chain; its full sequence is Ribonucleoside-diphosphate reductase large subunit (792 aa).

Substrate contacts are provided by residues Thr-200, 215–216, Gly-246, 415–419, and 606–610; these read SC, NLCAE, and PTAGT. Cys-216 and Cys-431 are disulfide-bonded. Catalysis depends on Asn-415, which acts as the Proton acceptor. The active-site Cysteine radical intermediate is the Cys-417. Glu-419 functions as the Proton acceptor in the catalytic mechanism. The segment at 758-781 is disordered; sequence SPPHSGMKQDGAWLPGPKNPEEES.

The protein belongs to the ribonucleoside diphosphate reductase large chain family. Heterotetramer composed of a homodimer of the large subunit (R1) and a homodimer of the small subunit (R2). Larger multisubunit protein complex are also active, composed of (R1)n(R2)n.

It carries out the reaction a 2'-deoxyribonucleoside 5'-diphosphate + [thioredoxin]-disulfide + H2O = a ribonucleoside 5'-diphosphate + [thioredoxin]-dithiol. Ribonucleoside-diphosphate reductase holoenzyme provides the precursors necessary for viral DNA synthesis. Allows virus growth in non-dividing cells, as well as reactivation from latency in infected hosts. Catalyzes the biosynthesis of deoxyribonucleotides from the corresponding ribonucleotides. The polypeptide is Ribonucleoside-diphosphate reductase large subunit (Human herpesvirus 8 type P (isolate GK18) (HHV-8)).